Reading from the N-terminus, the 302-residue chain is Acetylglutamate kinase (302 aa).

Substrate contacts are provided by residues 68–69 (GG), R90, and N194.

Belongs to the acetylglutamate kinase family. ArgB subfamily.

It is found in the cytoplasm. It catalyses the reaction N-acetyl-L-glutamate + ATP = N-acetyl-L-glutamyl 5-phosphate + ADP. It participates in amino-acid biosynthesis; L-arginine biosynthesis; N(2)-acetyl-L-ornithine from L-glutamate: step 2/4. Catalyzes the ATP-dependent phosphorylation of N-acetyl-L-glutamate. This chain is Acetylglutamate kinase, found in Acinetobacter baumannii (strain AB307-0294).